Consider the following 142-residue polypeptide: Large ribosomal subunit protein uL23 (142 aa).

The protein belongs to the universal ribosomal protein uL23 family. In terms of assembly, component of the large ribosomal subunit. Mature ribosomes consist of a small (40S) and a large (60S) subunit. The 40S subunit contains about 32 different proteins and 1 molecule of RNA (18S). The 60S subunit contains 45 different proteins and 3 molecules of RNA (25S, 5.8S and 5S).

Its subcellular location is the cytoplasm. In terms of biological role, component of the ribosome, a large ribonucleoprotein complex responsible for the synthesis of proteins in the cell. The small ribosomal subunit (SSU) binds messenger RNAs (mRNAs) and translates the encoded message by selecting cognate aminoacyl-transfer RNA (tRNA) molecules. The large subunit (LSU) contains the ribosomal catalytic site termed the peptidyl transferase center (PTC), which catalyzes the formation of peptide bonds, thereby polymerizing the amino acids delivered by tRNAs into a polypeptide chain. The nascent polypeptides leave the ribosome through a tunnel in the LSU and interact with protein factors that function in enzymatic processing, targeting, and the membrane insertion of nascent chains at the exit of the ribosomal tunnel. RPL25 is a major component of the universal docking site for these factors at the polypeptide exit tunnel. This Candida albicans (strain SC5314 / ATCC MYA-2876) (Yeast) protein is Large ribosomal subunit protein uL23.